The chain runs to 140 residues: Nucleoside diphosphate kinase (140 aa).

The ATP site is built by Lys-11, Phe-59, Arg-87, Thr-93, Arg-104, and Asn-114. His-117 acts as the Pros-phosphohistidine intermediate in catalysis.

This sequence belongs to the NDK family. Homotetramer. Requires Mg(2+) as cofactor.

The protein localises to the cytoplasm. It carries out the reaction a 2'-deoxyribonucleoside 5'-diphosphate + ATP = a 2'-deoxyribonucleoside 5'-triphosphate + ADP. The catalysed reaction is a ribonucleoside 5'-diphosphate + ATP = a ribonucleoside 5'-triphosphate + ADP. In terms of biological role, major role in the synthesis of nucleoside triphosphates other than ATP. The ATP gamma phosphate is transferred to the NDP beta phosphate via a ping-pong mechanism, using a phosphorylated active-site intermediate. This is Nucleoside diphosphate kinase from Acidiphilium cryptum (strain JF-5).